A 465-amino-acid polypeptide reads, in one-letter code: Polyadenylation factor subunit 2 (465 aa).

Positions 1–20 are enriched in low complexity; sequence MDGHNQNQYQNQNQIQQSQQ. The disordered stretch occupies residues 1-26; that stretch reads MDGHNQNQYQNQNQIQQSQQPPLKKY. WD repeat units lie at residues 133–163, 175–205, 217–247, 259–290, and 348–378; these read AHDS…KIWQ, AHTE…KIWN, GHHW…KLWD, KFKH…RVFD, and AHDK…RFWT. Residues 417 to 465 are disordered; it reads EFGAAPPPPATLEPHALPNMNGFINKKPRQEIPGIDSNIKSSTLPGLSI. Over residues 454 to 465 the composition is skewed to polar residues; it reads NIKSSTLPGLSI.

In terms of assembly, component of the cleavage and polyadenylation factor (CPF) complex, which is composed of at least PTI1, SYC1, SSU72, GLC7, MPE1, REF2, PFS2, PTA1, YSH1/BRR5, SWD2, CFT2/YDH1, YTH1, CFT1/YHH1, FIP1 and PAP1. Interacts with YSH1/BRR5, FIP1 and RNA14.

Its subcellular location is the nucleus. In terms of biological role, integral and essential component of the cleavage and polyadenylation factor (CPF) complex, which plays a key role in polyadenylation-dependent pre-mRNA 3'-end formation and cooperates with cleavage factors including the CFIA complex and NAB4/CFIB. May bridge the CPF and CFIA complexes. This chain is Polyadenylation factor subunit 2 (PFS2), found in Saccharomyces cerevisiae (strain ATCC 204508 / S288c) (Baker's yeast).